A 430-amino-acid chain; its full sequence is Adenylosuccinate synthetase (430 aa).

GTP is bound by residues 12 to 18 (GDEGKGK) and 40 to 42 (GHT). The active-site Proton acceptor is aspartate 13. Residues aspartate 13 and glycine 40 each contribute to the Mg(2+) site. IMP is bound by residues 13–16 (DEGK), 38–41 (NAGH), threonine 130, arginine 144, glutamine 224, threonine 239, and arginine 303. Histidine 41 serves as the catalytic Proton donor. Residue 299-305 (VNTGRKR) coordinates substrate. Residues arginine 305, 331–333 (KLD), and 413–415 (STS) each bind GTP.

This sequence belongs to the adenylosuccinate synthetase family. Homodimer. Requires Mg(2+) as cofactor.

The protein resides in the cytoplasm. The enzyme catalyses IMP + L-aspartate + GTP = N(6)-(1,2-dicarboxyethyl)-AMP + GDP + phosphate + 2 H(+). It functions in the pathway purine metabolism; AMP biosynthesis via de novo pathway; AMP from IMP: step 1/2. In terms of biological role, plays an important role in the de novo pathway of purine nucleotide biosynthesis. Catalyzes the first committed step in the biosynthesis of AMP from IMP. This is Adenylosuccinate synthetase from Nitrobacter hamburgensis (strain DSM 10229 / NCIMB 13809 / X14).